Consider the following 281-residue polypeptide: MSGVTAIEIPQWIQDNQEDFVPPVCNKCMFSDQLKVFYVGGPNQRKDFHLEEGEEFFFQRKGDMVLKVIEKGQVRDLVIKQGEMFMLPARVEHSPQRFSNSIGLVVERERKNTEFDCVRFLVGSSNITLFERWFYLTDVVKDLPPLIKEFYGSNEFKTGKPGKGTFACNAPYEARWTDLPVPINRKEFIYDHISEVKNGPVRIYGAPEYKTEVMLLGEGSYDLESGTVELLIWLQENTFAVVEESGFTYAMKSETMVRIKPNTKCLLNVKGGFAITIRMPA.

The tract at residues 1 to 162 is domain A (catalytic); it reads MSGVTAIEIP…SNEFKTGKPG (162 aa). Arg-45 is a binding site for O2. His-49, Glu-55, and His-93 together coordinate Fe cation. Glu-55 provides a ligand contact to substrate. Substrate is bound by residues Arg-97 and Glu-107. The tract at residues 163 to 179 is linker; it reads KGTFACNAPYEARWTDL. Positions 180–281 are domain B; that stretch reads PVPINRKEFI…GFAITIRMPA (102 aa).

This sequence belongs to the 3-HAO family. Fe(2+) serves as cofactor.

It localises to the cytoplasm. The enzyme catalyses 3-hydroxyanthranilate + O2 = (2Z,4Z)-2-amino-3-carboxymuconate 6-semialdehyde. Its pathway is cofactor biosynthesis; NAD(+) biosynthesis; quinolinate from L-kynurenine: step 3/3. Catalyzes the oxidative ring opening of 3-hydroxyanthranilate to 2-amino-3-carboxymuconate semialdehyde, which spontaneously cyclizes to quinolinate. This is 3-hydroxyanthranilate 3,4-dioxygenase (haao-1) from Caenorhabditis elegans.